A 292-amino-acid chain; its full sequence is UPF0749 protein Mb1856 (292 aa).

An N-terminal signal peptide occupies residues 1-28 (MSENRPEPVAAETSAATTARHSQADAGA). The tract at residues 1–30 (MSENRPEPVAAETSAATTARHSQADAGAHD) is disordered. 3 helical membrane passes run 68–88 (VFGTLAILLCLVLGVAIVTQV), 152–172 (AALSILVGAVGATGPGVMITI), and 229–249 (VLSPPYSILAIGDPPTLAAAM).

The protein belongs to the UPF0749 family.

It is found in the cell membrane. The sequence is that of UPF0749 protein Mb1856 from Mycobacterium bovis (strain ATCC BAA-935 / AF2122/97).